A 370-amino-acid chain; its full sequence is Chaperone protein DnaJ (370 aa).

The region spanning 4-68 (DYYQVLGVSK…QKRAAYDRFG (65 aa)) is the J domain. A CR-type zinc finger spans residues 133 to 211 (GIEKNISFSS…CHGMGRYHKQ (79 aa)). Residues C146, C149, C163, C166, C185, C188, C199, and C202 each coordinate Zn(2+). CXXCXGXG motif repeat units follow at residues 146–153 (CDACHGTG), 163–170 (CDSCGGVG), 185–192 (CHKCQGNG), and 199–206 (CKKCHGMG).

It belongs to the DnaJ family. Homodimer. Zn(2+) serves as cofactor.

It is found in the cytoplasm. Participates actively in the response to hyperosmotic and heat shock by preventing the aggregation of stress-denatured proteins and by disaggregating proteins, also in an autonomous, DnaK-independent fashion. Unfolded proteins bind initially to DnaJ; upon interaction with the DnaJ-bound protein, DnaK hydrolyzes its bound ATP, resulting in the formation of a stable complex. GrpE releases ADP from DnaK; ATP binding to DnaK triggers the release of the substrate protein, thus completing the reaction cycle. Several rounds of ATP-dependent interactions between DnaJ, DnaK and GrpE are required for fully efficient folding. Also involved, together with DnaK and GrpE, in the DNA replication of plasmids through activation of initiation proteins. This chain is Chaperone protein DnaJ, found in Rickettsia typhi (strain ATCC VR-144 / Wilmington).